The sequence spans 528 residues: uncharacterized protein (528 aa).

A disordered region spans residues 1-51 (MEHPKRPTPKNEALHIDASGRGESSFSVHRSHSGGHEPFAPSPGSSIGASV). Tandem repeats lie at residues 185–213 (EQEE…VKKY) and 285–313 (EQEQ…QQAL). The interval 185–313 (EQEEEYISNS…EEKRKLQQAL (129 aa)) is 2 X 29 AA repeats. Disordered regions lie at residues 467-497 (RAHG…NNDT) and 509-528 (TVHP…DSHY). Residues 472–496 (SPPTVVVQPSTSRAGSNSTANINND) show a composition bias toward polar residues.

This is an uncharacterized protein from Caenorhabditis elegans.